The following is a 479-amino-acid chain: Anaerobic nitric oxide reductase flavorubredoxin (479 aa).

The interval 30–210 (LRGSSYNSYL…PFSRLVTPKI (181 aa)) is zinc metallo-hydrolase. The Fe cation site is built by H79, E81, D83, H147, D166, and H227. The Flavodoxin-like domain occupies 254-393 (ITIFYDTMSN…LCREHGREIA (140 aa)). FMN contacts are provided by residues 260-264 (TMSNN) and 342-369 (AFGS…EMSL). The Rubredoxin-like domain maps to 423–474 (GPRMQCSVCQWIYDPAKGEPMQDVAPGTPWSEVPDNFLCPECSLGKDVFEEL). Residues C428, C431, C461, and C464 each coordinate Fe cation.

In the N-terminal section; belongs to the zinc metallo-hydrolase group 3 family. In terms of assembly, homotetramer. Fe cation serves as cofactor. The cofactor is FMN.

The protein localises to the cytoplasm. It functions in the pathway nitrogen metabolism; nitric oxide reduction. In terms of biological role, anaerobic nitric oxide reductase; uses NADH to detoxify nitric oxide (NO), protecting several 4Fe-4S NO-sensitive enzymes. Has at least 2 reductase partners, only one of which (NorW, flavorubredoxin reductase) has been identified. NO probably binds to the di-iron center; electrons enter from the NorW at rubredoxin and are transferred sequentially to the FMN center and the di-iron center. Also able to function as an aerobic oxygen reductase. This Escherichia coli O139:H28 (strain E24377A / ETEC) protein is Anaerobic nitric oxide reductase flavorubredoxin.